A 431-amino-acid chain; its full sequence is Peptidase B (431 aa).

Positions 196 and 201 each coordinate Mn(2+). The active site involves lysine 208. Mn(2+) contacts are provided by aspartate 219, aspartate 278, and glutamate 280. Arginine 282 is a catalytic residue.

This sequence belongs to the peptidase M17 family. As to quaternary structure, homohexamer. Mn(2+) is required as a cofactor.

Its subcellular location is the cytoplasm. The catalysed reaction is Release of an N-terminal amino acid, Xaa, from a peptide or arylamide. Xaa is preferably Glu or Asp but may be other amino acids, including Leu, Met, His, Cys and Gln.. Its function is as follows. Probably plays an important role in intracellular peptide degradation. In Photorhabdus laumondii subsp. laumondii (strain DSM 15139 / CIP 105565 / TT01) (Photorhabdus luminescens subsp. laumondii), this protein is Peptidase B.